Reading from the N-terminus, the 471-residue chain is Siroheme synthase (471 aa).

The segment at 1–203 (MEYLPLFADL…GRLEQAEQAL (203 aa)) is precorrin-2 dehydrogenase /sirohydrochlorin ferrochelatase. Residues 22 to 23 (EV) and 43 to 44 (RA) contribute to the NAD(+) site. Ser-128 carries the post-translational modification Phosphoserine. Positions 215–471 (GEVALVGAGP…QKRASVVNLA (257 aa)) are uroporphyrinogen-III C-methyltransferase. Pro-224 is a binding site for S-adenosyl-L-methionine. The Proton acceptor role is filled by Asp-247. The active-site Proton donor is Lys-269. Residues 300–302 (GGD), Ile-305, 330–331 (TA), Met-382, and Gly-411 each bind S-adenosyl-L-methionine.

In the N-terminal section; belongs to the precorrin-2 dehydrogenase / sirohydrochlorin ferrochelatase family. It in the C-terminal section; belongs to the precorrin methyltransferase family.

It carries out the reaction uroporphyrinogen III + 2 S-adenosyl-L-methionine = precorrin-2 + 2 S-adenosyl-L-homocysteine + H(+). It catalyses the reaction precorrin-2 + NAD(+) = sirohydrochlorin + NADH + 2 H(+). The enzyme catalyses siroheme + 2 H(+) = sirohydrochlorin + Fe(2+). Its pathway is cofactor biosynthesis; adenosylcobalamin biosynthesis; precorrin-2 from uroporphyrinogen III: step 1/1. It participates in cofactor biosynthesis; adenosylcobalamin biosynthesis; sirohydrochlorin from precorrin-2: step 1/1. The protein operates within porphyrin-containing compound metabolism; siroheme biosynthesis; precorrin-2 from uroporphyrinogen III: step 1/1. It functions in the pathway porphyrin-containing compound metabolism; siroheme biosynthesis; siroheme from sirohydrochlorin: step 1/1. Its pathway is porphyrin-containing compound metabolism; siroheme biosynthesis; sirohydrochlorin from precorrin-2: step 1/1. Functionally, multifunctional enzyme that catalyzes the SAM-dependent methylations of uroporphyrinogen III at position C-2 and C-7 to form precorrin-2 via precorrin-1. Then it catalyzes the NAD-dependent ring dehydrogenation of precorrin-2 to yield sirohydrochlorin. Finally, it catalyzes the ferrochelation of sirohydrochlorin to yield siroheme. The sequence is that of Siroheme synthase from Sodalis glossinidius (strain morsitans).